A 525-amino-acid polypeptide reads, in one-letter code: MTDRTSVSATDRILIIDFGSQVTQLIARRVRESGVYSEIQPFNTVTAASIAAFAPKGVILSGGPASVTAADTPRAPIELFTMGLPVLGICYGQQTMVAQLGGRVEAPDHREFGRAFVEVTAGCALFDGVWTPGERDQVWMSHGDRVDAIPEGFSVVAVSEGAPYAAIADEARHFYGVQFHPEVVHTPKGAALLRNFTHGICGCGGDWTMAAFKDQAIARVREQVGSGRVICGLSGGVDSSVVAALIHEAIGEQLVCVLVDHGMMRQGETEQVVRVFRDRFNITLVHRDASELFLGKLDGVVDPEAKRKIIGATFIDVFDEEARKVGGADFLAQGTLYPDVIESVSFTGGPSVTIKSHHNVGGLPERMKMALVEPLRELFKDEVRDLGRELGLPDEMVGRHPFPGPGLAIRIPGQPLTREKLDILRRADAIYLEEIRNAGLYDVIWQAFAVLLPVRTVGVMGDARSYDFALALRAVTSTDGMTADYYPFDHTFLGRVANRIINEVKGVNRVVYDITSKPPGTIEWE.

The Glutamine amidotransferase type-1 domain occupies 12 to 206 (RILIIDFGSQ…THGICGCGGD (195 aa)). Residue Cys90 is the Nucleophile of the active site. Active-site residues include His180 and Glu182. The GMPS ATP-PPase domain maps to 207 to 399 (WTMAAFKDQA…LGLPDEMVGR (193 aa)). An ATP-binding site is contributed by 234 to 240 (SGGVDSS).

As to quaternary structure, homodimer.

It carries out the reaction XMP + L-glutamine + ATP + H2O = GMP + L-glutamate + AMP + diphosphate + 2 H(+). It functions in the pathway purine metabolism; GMP biosynthesis; GMP from XMP (L-Gln route): step 1/1. Its function is as follows. Catalyzes the synthesis of GMP from XMP. The protein is GMP synthase [glutamine-hydrolyzing] of Rhodospirillum rubrum (strain ATCC 11170 / ATH 1.1.1 / DSM 467 / LMG 4362 / NCIMB 8255 / S1).